Here is a 396-residue protein sequence, read N- to C-terminus: Phosphoglycerate kinase (396 aa).

Substrate-binding positions include 21-23 (DIN), Arg-36, 59-62 (HFGR), Arg-114, and Arg-147. ATP is bound by residues Lys-197, Glu-319, and 349–352 (GGDT).

This sequence belongs to the phosphoglycerate kinase family. As to quaternary structure, monomer.

It is found in the cytoplasm. The enzyme catalyses (2R)-3-phosphoglycerate + ATP = (2R)-3-phospho-glyceroyl phosphate + ADP. Its pathway is carbohydrate degradation; glycolysis; pyruvate from D-glyceraldehyde 3-phosphate: step 2/5. The chain is Phosphoglycerate kinase from Jannaschia sp. (strain CCS1).